A 122-amino-acid chain; its full sequence is Large ribosomal subunit protein uL14 (122 aa).

The protein belongs to the universal ribosomal protein uL14 family. In terms of assembly, part of the 50S ribosomal subunit. Forms a cluster with proteins L3 and L19. In the 70S ribosome, L14 and L19 interact and together make contacts with the 16S rRNA in bridges B5 and B8.

Functionally, binds to 23S rRNA. Forms part of two intersubunit bridges in the 70S ribosome. In Chlamydia trachomatis serovar A (strain ATCC VR-571B / DSM 19440 / HAR-13), this protein is Large ribosomal subunit protein uL14.